The following is a 366-amino-acid chain: Polyprenyl transferase AOL_s00215g276 (366 aa).

The interval 1–22 (MESIIARPRTRSSAKEKTQTMS) is disordered. 7 consecutive transmembrane segments (helical) span residues 53-73 (LHTL…CLSA), 85-105 (FLSV…AFCT), 137-157 (IIAF…TLGF), 160-180 (ALVC…KRVV), 185-205 (LVLG…VAGN), 212-232 (AVPM…IYAT), and 253-273 (HMHQ…SFTA). A glycan (N-linked (GlcNAc...) asparagine) is linked at Asn277. 2 helical membrane-spanning segments follow: residues 281–301 (LFWS…LLSL) and 312–332 (VFLM…IELW). N-linked (GlcNAc...) asparagine glycosylation occurs at Asn352.

This sequence belongs to the UbiA prenyltransferase family. Mg(2+) is required as a cofactor.

Its subcellular location is the membrane. It participates in secondary metabolite biosynthesis; terpenoid biosynthesis. In terms of biological role, polyprenyl transferase; part of the gene cluster that mediates the biosynthesis of sesquiterpenyl epoxy-cyclohexenoids (SECs) such as anthrobotrisins and arthrosporols, metabolites that possess a novel hybrid carbon skeleton consisting of a polyketide-derived epoxycyclohexenol combined with a terpenoid-derived monocyclic sesquiterpenol substructure (PKS-PTS hybrid). The SEC pathway plays an important role for fungal soil colonization via decreasing fungal nematode-capturing ability. Within the pathway, the polyprenyl transferase catalyzes the farnesylation of toluquinol to yield farnesyl hydroquinone, the first hybrid precursor for biosynthesis of SECs, and farnesyl quinone (34) might be the key precursor for the epoxy ring formation. The pathway begins with the biosynthesis of 6-methylsalicylic acid (6-MSA), the first precursor of the polyketide-derived epoxycyclohexenol in arthrosporols, by the polyketide synthase (PKS) AOL_s00215g283 via condensation of 1 acetate and 3 malonate units. The 6-methylsalicylic acid decarboxylase AOL_s00215g281 then catalyzes the decarboxylation of 6-methylsalicylic acid to yield m-cresol. The cytochrome P450 monooxygenase AOL_s00215g282 further oxidizes m-cresol to yield toluquinol. With the assistance of the oxidoreductase AOL_s00215g277, the polyprenyl transferase AOL_s00215g276 catalyzes the farnesylation of toluquinol to produce farnesyl hydroquinone, the hybrid precursor for biosynthesis of SECs. Farnesyl hydroquinone undergoes epoxidation and then subsequent dehydrogenation to form farnesyl epoxy-quinone, the first and simplest SEC. The cytochrome P450 monooxygenase AOL_s00215g278 and the FAD-dependent monooxygenase AOL_s00215g279 might be involved in the oxygenation of the phenol moiety, most likely in the epoxy formation. The cytochrome P450 monooxygenases AOL_s00215g274 and AOL_s00215g280 are involved in specific regional ketone reductions at respectively C-4 and C-1 of farnesyl epoxy-quinone PubMed:33823587. In Arthrobotrys oligospora (strain ATCC 24927 / CBS 115.81 / DSM 1491) (Nematode-trapping fungus), this protein is Polyprenyl transferase AOL_s00215g276.